Consider the following 322-residue polypeptide: tRNA-dihydrouridine synthase B (322 aa).

FMN-binding positions include 16 to 18 (PMA) and Gln70. The active-site Proton donor is the Cys100. FMN-binding positions include Lys139, 200–202 (NGD), and 224–225 (GR).

It belongs to the Dus family. DusB subfamily. The cofactor is FMN.

The enzyme catalyses a 5,6-dihydrouridine in tRNA + NAD(+) = a uridine in tRNA + NADH + H(+). It catalyses the reaction a 5,6-dihydrouridine in tRNA + NADP(+) = a uridine in tRNA + NADPH + H(+). In terms of biological role, catalyzes the synthesis of 5,6-dihydrouridine (D), a modified base found in the D-loop of most tRNAs, via the reduction of the C5-C6 double bond in target uridines. The polypeptide is tRNA-dihydrouridine synthase B (Vibrio parahaemolyticus serotype O3:K6 (strain RIMD 2210633)).